A 327-amino-acid chain; its full sequence is MPADQRPLAIALMGPTASGKTALALEAAERWNGEIVSVDSALVYRGLEIGAAKPDAAMRAAVPHHLLDLRDPWQVYSAAEFAGDARQAIAQIVARGKLPILAGGTGLYFRALLEGLSHLPEADRAARASIAAEAEQIGWAGLHSELARVDPVAAARIHATDPQRIQRALEVYRISGRPISYWQALPPGLRLPVRVLKVVLAPRERAVLHGRIERRLDAMLAQGFLAEVEQVRALPQMRAVAVPLDLPAVRAVGYRQAWEYLDGAGSLAEFRDKAIQATRQLAKRQLTWLRGELDARWFDPERDRHQLERALVGFLGDRSAVRQASGV.

ATP is bound at residue 14 to 21; the sequence is GPTASGKT. Position 16 to 21 (16 to 21) interacts with substrate; the sequence is TASGKT. Interaction with substrate tRNA regions lie at residues 39–42 and 163–167; these read DSAL and QRIQR.

The protein belongs to the IPP transferase family. Monomer. The cofactor is Mg(2+).

It carries out the reaction adenosine(37) in tRNA + dimethylallyl diphosphate = N(6)-dimethylallyladenosine(37) in tRNA + diphosphate. Catalyzes the transfer of a dimethylallyl group onto the adenine at position 37 in tRNAs that read codons beginning with uridine, leading to the formation of N6-(dimethylallyl)adenosine (i(6)A). This chain is tRNA dimethylallyltransferase, found in Xanthomonas oryzae pv. oryzae (strain PXO99A).